The sequence spans 176 residues: Protein GrpE (176 aa).

The protein belongs to the GrpE family. Homodimer.

The protein localises to the cytoplasm. Its function is as follows. Participates actively in the response to hyperosmotic and heat shock by preventing the aggregation of stress-denatured proteins, in association with DnaK and GrpE. It is the nucleotide exchange factor for DnaK and may function as a thermosensor. Unfolded proteins bind initially to DnaJ; upon interaction with the DnaJ-bound protein, DnaK hydrolyzes its bound ATP, resulting in the formation of a stable complex. GrpE releases ADP from DnaK; ATP binding to DnaK triggers the release of the substrate protein, thus completing the reaction cycle. Several rounds of ATP-dependent interactions between DnaJ, DnaK and GrpE are required for fully efficient folding. The polypeptide is Protein GrpE (Rickettsia bellii (strain OSU 85-389)).